Reading from the N-terminus, the 224-residue chain is MLIEIPNVFSKQEVSHLREQLDARRWIDGNQTSGAMATTRKRNQQLDKDDPVAVALGQQIMDRLLAHPQFVSAALPLQFYPPLFNRYQGGETFGYHIDNAIRSTPDGMIRTDLSATLFLSEPENYQGGELVIQDTYGQQSIKLSAGSLVLYPSSSLHQVTPVLSGERTAAFMWLQSMVRDEGQRRLLFQLDQSIQSLTAQTAAEQELFNLSGVYHNLLRRWSEL.

Residues 78 to 176 form the Fe2OG dioxygenase domain; it reads QFYPPLFNRY…RTAAFMWLQS (99 aa). 3 residues coordinate Fe cation: histidine 96, aspartate 98, and histidine 157. A 2-oxoglutarate-binding site is contributed by arginine 167.

The cofactor is Fe(2+). L-ascorbate serves as cofactor.

This is PKHD-type hydroxylase Sbal_3634 from Shewanella baltica (strain OS155 / ATCC BAA-1091).